The following is a 212-amino-acid chain: Adenylate kinase (212 aa).

An ATP-binding site is contributed by glycine 10 to threonine 15. Residues serine 30–valine 59 are NMP. Residues threonine 31, arginine 36, glutamate 57 to valine 59, glycine 86 to arginine 89, and glutamine 93 each bind AMP. An LID region spans residues glycine 127 to aspartate 159. Residues arginine 128 and threonine 137–phenylalanine 138 contribute to the ATP site. Residues arginine 156 and arginine 167 each contribute to the AMP site. An ATP-binding site is contributed by glutamine 195.

The protein belongs to the adenylate kinase family. Monomer.

The protein resides in the cytoplasm. It catalyses the reaction AMP + ATP = 2 ADP. The protein operates within purine metabolism; AMP biosynthesis via salvage pathway; AMP from ADP: step 1/1. Functionally, catalyzes the reversible transfer of the terminal phosphate group between ATP and AMP. Plays an important role in cellular energy homeostasis and in adenine nucleotide metabolism. The protein is Adenylate kinase of Streptococcus pneumoniae (strain 70585).